The following is a 288-amino-acid chain: Transmembrane and coiled-coil domain-containing protein 5A (288 aa).

The stretch at 10–192 (KRNIISLNMD…ALFLEREVSK (183 aa)) forms a coiled coil. The chain crosses the membrane as a helical span at residues 224–244 (IFCCLFFITLFFIRLLSYMFF).

The protein belongs to the TMCO5 family.

It is found in the endoplasmic reticulum membrane. The protein resides in the nucleus membrane. This chain is Transmembrane and coiled-coil domain-containing protein 5A (TMCO5A), found in Homo sapiens (Human).